A 236-amino-acid polypeptide reads, in one-letter code: C-&gt;U-editing enzyme APOBEC-1 (236 aa).

Residues Gly10–Leu134 enclose the CMP/dCMP-type deaminase domain. His61 provides a ligand contact to Zn(2+). Catalysis depends on Glu63, which acts as the Proton donor. Zn(2+)-binding residues include Cys93 and Cys96.

It belongs to the cytidine and deoxycytidylate deaminase family. In terms of assembly, homodimer. Interacts with A1CF; form an mRNA editing complex. Interacts with RBM47; form an mRNA editing complex. Found in a complex with CELF2/CUGBP2 and A1CF. Interacts with HNRPAB. Interacts with SYNCRIP. Zn(2+) is required as a cofactor. Expressed exclusively in the small intestine.

The protein resides in the cytoplasm. The protein localises to the nucleus. It carries out the reaction a cytidine in mRNA + H2O + H(+) = a uridine in mRNA + NH4(+). The catalysed reaction is cytidine(6666) in apoB mRNA + H2O + H(+) = uridine(6666) in apoB mRNA + NH4(+). In terms of biological role, cytidine deaminase catalyzing the cytidine to uridine postranscriptional editing of a variety of mRNAs. Form complexes with cofactors that confer differential editing activity and selectivity. Responsible for the postranscriptional editing of a CAA codon for Gln to a UAA codon for stop in the apolipoprotein B mRNA. Also involved in CGA (Arg) to UGA (Stop) editing in the NF1 mRNA. May also play a role in the epigenetic regulation of gene expression by participating in DNA demethylation. The polypeptide is C-&gt;U-editing enzyme APOBEC-1 (Homo sapiens (Human)).